The chain runs to 510 residues: MKTITLRPGQMTLADLRHIYQHPVHITLDESAYVPIQQSVDCVQAILAEQRTAYGINTGFGLLASTRIATEDLENLQRSIVLSHAAGVGEANDDAIVRLIMVLKINSLARGFSGIRLEVIQALITLVNAGVYPHIPLKGSVGASGDLAPLAHMSLLLLGEGKARYQGEWLPAHTALAQAGLQPLTLAAKEGLALLNGTQVSAAYALRGLFEAEDLYAAASVFGCLTVDAALGSRSPFDARIHAVRGQRGQIDAASTYRHLLGERSEISESHKNCDKVQDPYSLRCQPQVMGACLGQIRQAAEVLAIESNAVSDNPLVFAEQGDVLSGGNFHAEPVAMAADNLALALAEIGSLSECRISLMMDKHMSQLPPFLVENGGVNSGFMIAQVTAAALTSENKGLAFPASVDSIPTSANQEDHVSMAPRAGKRLWEMAENVRNILAIEWLAACQGLDLRKGLRTSAILEPARQLLRQHVTYYDKDRFFAPDIEVASQLIAQRHMNELMPAKLLPSL.

Positions 143 to 145 (ASG) form a cross-link, 5-imidazolinone (Ala-Gly). The residue at position 144 (serine 144) is a 2,3-didehydroalanine (Ser).

It belongs to the PAL/histidase family. In terms of processing, contains an active site 4-methylidene-imidazol-5-one (MIO), which is formed autocatalytically by cyclization and dehydration of residues Ala-Ser-Gly.

It is found in the cytoplasm. It catalyses the reaction L-histidine = trans-urocanate + NH4(+). The protein operates within amino-acid degradation; L-histidine degradation into L-glutamate; N-formimidoyl-L-glutamate from L-histidine: step 1/3. This is Histidine ammonia-lyase from Yersinia pseudotuberculosis serotype I (strain IP32953).